Here is a 534-residue protein sequence, read N- to C-terminus: Calcium-dependent protein kinase 29 (534 aa).

A disordered region spans residues 1 to 72; sequence MGFCFSKFGK…STSSGSQIGP (72 aa). Gly-2 carries N-myristoyl glycine lipidation. Positions 16-27 are enriched in low complexity; it reads IPISSSSDSSPP. The segment covering 49–63 has biased composition (pro residues); that stretch reads NPQPKPKPAPPPPPS. A Protein kinase domain is found at 85-343; that stretch reads YDLHKELGRG…AAEALEHPWM (259 aa). Residues 91–99 and Lys-114 contribute to the ATP site; that span reads LGRGQFGIT. Asp-209 serves as the catalytic Proton acceptor. Position 249 is a phosphoserine (Ser-249). The interval 348–378 is autoinhibitory domain; it reads ISDKPINSAVLVRMKQFRAMNKLKKLALKVI. EF-hand domains are found at residues 385–420, 421–456, 457–492, and 493–527; these read EEIKGLKQTFKNMDTDESGTITFDELRNGLHRLGSK, LTESEIKQLMEAADVDKSGTIDYIEFVTATMHRHRL, EKEENLIEAFKYFDKDRSGFITRDELKHSMTEYGMG, and DDATIDEVINDVDTDNDGRINYEEFVAMMRKGTTD. Ca(2+) contacts are provided by Asp-398, Asp-400, Ser-402, Thr-404, Glu-409, Asp-434, Asp-436, Ser-438, Thr-440, Glu-445, Asp-470, Asp-472, Ser-474, Glu-481, Asp-505, Asp-507, Asp-509, Arg-511, and Glu-516.

This sequence belongs to the protein kinase superfamily. Ser/Thr protein kinase family. CDPK subfamily.

It is found in the membrane. The catalysed reaction is L-seryl-[protein] + ATP = O-phospho-L-seryl-[protein] + ADP + H(+). It catalyses the reaction L-threonyl-[protein] + ATP = O-phospho-L-threonyl-[protein] + ADP + H(+). With respect to regulation, activated by calcium. Autophosphorylation may play an important role in the regulation of the kinase activity. In terms of biological role, may play a role in signal transduction pathways that involve calcium as a second messenger. The protein is Calcium-dependent protein kinase 29 (CPK29) of Arabidopsis thaliana (Mouse-ear cress).